The primary structure comprises 365 residues: DNA replication and repair protein RecF (365 aa).

Position 30-37 (Gly30–Thr37) interacts with ATP.

It belongs to the RecF family.

It localises to the cytoplasm. Functionally, the RecF protein is involved in DNA metabolism; it is required for DNA replication and normal SOS inducibility. RecF binds preferentially to single-stranded, linear DNA. It also seems to bind ATP. The chain is DNA replication and repair protein RecF from Streptococcus pneumoniae (strain 70585).